A 186-amino-acid polypeptide reads, in one-letter code: UPF0301 protein Swit_2673 (186 aa).

This sequence belongs to the UPF0301 (AlgH) family.

The polypeptide is UPF0301 protein Swit_2673 (Rhizorhabdus wittichii (strain DSM 6014 / CCUG 31198 / JCM 15750 / NBRC 105917 / EY 4224 / RW1) (Sphingomonas wittichii)).